Consider the following 458-residue polypeptide: Alpha-glucosides-binding periplasmic protein AglE (458 aa).

The N-terminal stretch at 1–27 (MKRSLLIGVAAFALLAGTAGLAGTAGA) is a signal peptide.

This sequence belongs to the bacterial solute-binding protein 1 family.

It localises to the periplasm. In terms of biological role, part of the binding-protein-dependent transport system for alpha-glucosides such as sucrose, maltose and trehalose. The protein is Alpha-glucosides-binding periplasmic protein AglE (aglE) of Rhizobium meliloti (strain 1021) (Ensifer meliloti).